The following is a 115-amino-acid chain: Meiotically up-regulated gene 168 protein (115 aa).

The segment at Ser82–Ser115 is disordered. Residues Pro99–Ile109 are compositionally biased toward polar residues.

The protein resides in the nucleus. In terms of biological role, has a role in meiosis. This chain is Meiotically up-regulated gene 168 protein (mug168), found in Schizosaccharomyces pombe (strain 972 / ATCC 24843) (Fission yeast).